A 239-amino-acid chain; its full sequence is Putative transcriptional regulator of 2-aminoethylphosphonate degradation operons (239 aa).

The HTH gntR-type domain occupies Ile-8–Glu-76. The segment at residues Glu-36–Ala-55 is a DNA-binding region (H-T-H motif).

The sequence is that of Putative transcriptional regulator of 2-aminoethylphosphonate degradation operons (phnR) from Salmonella typhi.